A 494-amino-acid polypeptide reads, in one-letter code: Glycogen synthase (494 aa).

Lysine 15 contacts ADP-alpha-D-glucose.

It belongs to the glycosyltransferase 1 family. Bacterial/plant glycogen synthase subfamily.

It carries out the reaction [(1-&gt;4)-alpha-D-glucosyl](n) + ADP-alpha-D-glucose = [(1-&gt;4)-alpha-D-glucosyl](n+1) + ADP + H(+). The protein operates within glycan biosynthesis; glycogen biosynthesis. Functionally, synthesizes alpha-1,4-glucan chains using ADP-glucose. This chain is Glycogen synthase, found in Paramagnetospirillum magneticum (strain ATCC 700264 / AMB-1) (Magnetospirillum magneticum).